Consider the following 70-residue polypeptide: Brevinin-1PLb (70 aa).

Residues 1 to 22 form the signal peptide; the sequence is MFTTKKSMLLLFFLGTINLSLC. The propeptide occupies 23–44; it reads EEERNAEEERRDEPDEMNVEVE. Cys64 and Cys70 are joined by a disulfide.

In terms of tissue distribution, expressed by the skin glands.

It localises to the secreted. Antimicrobial activity against the Gram-negative bacterium E.coli, the Gram-positive bacterium S.aureus and the yeast C.albicans. This chain is Brevinin-1PLb, found in Lithobates palustris (Pickerel frog).